We begin with the raw amino-acid sequence, 434 residues long: Enolase (434 aa).

Gln167 serves as a coordination point for (2R)-2-phosphoglycerate. Catalysis depends on Glu209, which acts as the Proton donor. The Mg(2+) site is built by Asp246, Glu291, and Asp318. The (2R)-2-phosphoglycerate site is built by Lys343, Arg372, Ser373, and Lys394. Lys343 (proton acceptor) is an active-site residue.

The protein belongs to the enolase family. As to quaternary structure, component of the RNA degradosome, a multiprotein complex involved in RNA processing and mRNA degradation. Requires Mg(2+) as cofactor.

Its subcellular location is the cytoplasm. The protein localises to the secreted. The protein resides in the cell surface. The enzyme catalyses (2R)-2-phosphoglycerate = phosphoenolpyruvate + H2O. Its pathway is carbohydrate degradation; glycolysis; pyruvate from D-glyceraldehyde 3-phosphate: step 4/5. Its function is as follows. Catalyzes the reversible conversion of 2-phosphoglycerate (2-PG) into phosphoenolpyruvate (PEP). It is essential for the degradation of carbohydrates via glycolysis. This chain is Enolase, found in Buchnera aphidicola subsp. Acyrthosiphon pisum (strain APS) (Acyrthosiphon pisum symbiotic bacterium).